The chain runs to 392 residues: L-rhamnonate dehydratase (392 aa).

Substrate contacts are provided by His22 and Arg48. The Mg(2+) site is built by Asp214, Glu240, and Glu268. The active-site Proton acceptor is the His318. Glu338 contacts substrate.

Belongs to the mandelate racemase/muconate lactonizing enzyme family. RhamD subfamily. In terms of assembly, homooctamer; tetramer of dimers. Mg(2+) serves as cofactor.

It carries out the reaction L-rhamnonate = 2-dehydro-3-deoxy-L-rhamnonate + H2O. Its function is as follows. Catalyzes the dehydration of L-rhamnonate to 2-keto-3-deoxy-L-rhamnonate (KDR). This Burkholderia orbicola (strain MC0-3) protein is L-rhamnonate dehydratase.